We begin with the raw amino-acid sequence, 270 residues long: Probable septum site-determining protein MinC (270 aa).

Positions 105–129 (DRRAPSSKAADEAPVQQAEPAAPAA) are disordered. Positions 116–129 (EAPVQQAEPAAPAA) are enriched in low complexity.

This sequence belongs to the MinC family. Interacts with MinD and FtsZ.

Functionally, cell division inhibitor that blocks the formation of polar Z ring septums. Rapidly oscillates between the poles of the cell to destabilize FtsZ filaments that have formed before they mature into polar Z rings. Prevents FtsZ polymerization. The chain is Probable septum site-determining protein MinC from Burkholderia mallei (strain NCTC 10247).